The primary structure comprises 187 residues: Peptide methionine sulfoxide reductase A2-1 (187 aa).

This sequence belongs to the MsrA Met sulfoxide reductase family.

It localises to the cytoplasm. The protein localises to the cytosol. The enzyme catalyses L-methionyl-[protein] + [thioredoxin]-disulfide + H2O = L-methionyl-(S)-S-oxide-[protein] + [thioredoxin]-dithiol. It carries out the reaction [thioredoxin]-disulfide + L-methionine + H2O = L-methionine (S)-S-oxide + [thioredoxin]-dithiol. Functionally, catalyzes the reduction of methionine sulfoxide (MetSO) to methionine in proteins. Plays a protective role against oxidative stress by restoring activity to proteins that have been inactivated by methionine oxidation. MSRA family specifically reduces the MetSO S-enantiomer. The polypeptide is Peptide methionine sulfoxide reductase A2-1 (MSRA2-1) (Oryza sativa subsp. japonica (Rice)).